Consider the following 784-residue polypeptide: ATP-dependent 6-phosphofructokinase, platelet type (784 aa).

An N-acetylmethionine modification is found at Met1. The tract at residues 1-399 (MDADDSRAPK…NLNTYKRLAI (399 aa)) is N-terminal catalytic PFK domain 1. Phosphoserine is present on residues Ser6, Ser12, and Ser21. ATP is bound by residues Gly34, 97 to 98 (RC), and 127 to 130 (GDGS). Position 128 (Asp128) interacts with Mg(2+). Ser142 carries the post-translational modification Phosphoserine. Residues 173–175 (SID), Arg210, 217–219 (MGR), Glu273, Arg301, and 307–310 (HVQR) each bind substrate. Catalysis depends on Asp175, which acts as the Proton acceptor. Ser386 bears the Phosphoserine mark. Lys395 is modified (N6-acetyllysine). The interval 400–411 (KLPDDQIPKTNC) is interdomain linker. The interval 412-784 (NVAVINVGAP…QLEHVQPWSV (373 aa)) is C-terminal regulatory PFK domain 2. Arg481 is a beta-D-fructose 2,6-bisphosphate binding site. Lys486 is modified (N6-acetyllysine). Beta-D-fructose 2,6-bisphosphate is bound by residues 538–542 (TVSNN), Arg576, 583–585 (MGG), and Glu639. Ser540 carries O-linked (GlcNAc) serine glycosylation. Tyr651 is modified (phosphotyrosine). Residues Arg665 and 671-674 (HMQQ) contribute to the beta-D-fructose 2,6-bisphosphate site. The residue at position 688 (Lys688) is an N6-acetyllysine. Residue Arg744 coordinates beta-D-fructose 2,6-bisphosphate. Residue Ser783 is modified to Phosphoserine.

This sequence belongs to the phosphofructokinase type A (PFKA) family. ATP-dependent PFK group I subfamily. Eukaryotic two domain clade 'E' sub-subfamily. Homo- and heterotetramers. Phosphofructokinase (PFK) enzyme functions as a tetramer composed of different combinations of 3 types of subunits, called PFKM (M), PFKL (L) and PFKP (P). The composition of the PFK tetramer differs according to the tissue type it is present in. The kinetic and regulatory properties of the tetrameric enzyme are dependent on the subunit composition, hence can vary across tissues. Interacts with ATG4B; promoting phosphorylation of ATG4B. It depends on Mg(2+) as a cofactor. In terms of processing, glcNAcylation decreases enzyme activity. Post-translationally, phosphorylation at Ser-386 promotes interaction with ATG4B.

It is found in the cytoplasm. The enzyme catalyses beta-D-fructose 6-phosphate + ATP = beta-D-fructose 1,6-bisphosphate + ADP + H(+). The protein operates within carbohydrate degradation; glycolysis; D-glyceraldehyde 3-phosphate and glycerone phosphate from D-glucose: step 3/4. Allosterically activated by ADP, AMP, or fructose 2,6-bisphosphate, and allosterically inhibited by ATP or citrate. In terms of biological role, catalyzes the phosphorylation of D-fructose 6-phosphate to fructose 1,6-bisphosphate by ATP, the first committing step of glycolysis. This Pongo abelii (Sumatran orangutan) protein is ATP-dependent 6-phosphofructokinase, platelet type (PFKP).